Here is a 187-residue protein sequence, read N- to C-terminus: MINFSTNSDLILRESVVGSRRISNYWWASVVLLGASGFLIVGISSYLQYDLVPFLSAKNIVFVPQGLVMCFYGSAGILLSIYLWLTIFWNVGEGYNEFDKVNGLVRIFRWGYPGKDRRINIVYDIKDIQAIRVEIKEGINPRRVIYLKIKGTRDMPLTRIGQPLTLAEIEEQAARLARFLQVNIEGI.

Transmembrane regions (helical) follow at residues 25–47 (YWWA…SSYL) and 62–84 (FVPQ…IYLW).

Belongs to the Ycf4 family.

The protein localises to the plastid. The protein resides in the chloroplast thylakoid membrane. In terms of biological role, seems to be required for the assembly of the photosystem I complex. The sequence is that of Photosystem I assembly protein Ycf4 from Mesostigma viride (Green alga).